A 112-amino-acid polypeptide reads, in one-letter code: CENP-A recruiting complex protein mis19 (112 aa).

Component of the CENP-A recruiting complex composed of at least mis16, mis19, mis19 and mis20.

The protein resides in the chromosome. Its subcellular location is the centromere. The protein localises to the kinetochore. Functionally, component of the CENP-A recruiting complex that ensures the integrity of mitotic spindles through maintenance of kinetochore factors mis6/CENP-I and cnp1/CENP-A. Links mis16 and mis18 to recruit CENP-A through interacting with non-sense-mediated mRNA decay (NMD) factors and the SWI/SNF complex. Also links mis18 with the CCAN/mis6/ctf19 complex to promote CENP-A assembly. The protein is CENP-A recruiting complex protein mis19 of Schizosaccharomyces pombe (strain 972 / ATCC 24843) (Fission yeast).